A 425-amino-acid chain; its full sequence is GTPase Obg (425 aa).

The Obg domain occupies 1–158; that stretch reads MFIDKARIFV…RWITLELKMI (158 aa). Positions 159 to 330 constitute an OBG-type G domain; the sequence is ADVGLLGFPN…VIAYVSKMLK (172 aa). GTP-binding positions include 165-172, 190-194, 212-215, 282-285, and 311-313; these read GFPNVGKS, FTTLT, DIPG, NKFD, and SAA. 2 residues coordinate Mg(2+): Ser-172 and Thr-192. The 82-residue stretch at 344 to 425 folds into the OCT domain; it reads YRPELDIGTE…IYELEFEFYN (82 aa).

Belongs to the TRAFAC class OBG-HflX-like GTPase superfamily. OBG GTPase family. Monomer. The cofactor is Mg(2+).

It localises to the cytoplasm. Functionally, an essential GTPase which binds GTP, GDP and possibly (p)ppGpp with moderate affinity, with high nucleotide exchange rates and a fairly low GTP hydrolysis rate. Plays a role in control of the cell cycle, stress response, ribosome biogenesis and in those bacteria that undergo differentiation, in morphogenesis control. The sequence is that of GTPase Obg from Clostridioides difficile (strain 630) (Peptoclostridium difficile).